We begin with the raw amino-acid sequence, 729 residues long: Cytoplasmic polyadenylation element-binding protein 4 (729 aa).

Disordered stretches follow at residues 20–50 (FPVR…NNTA) and 78–133 (EKAK…KEKL). The segment covering 24 to 35 (FHPHLQPPHHHQ) has biased composition (basic residues). A compositionally biased stretch (low complexity) spans 83–96 (QQQEQQDPLEKQQL). Ser-97, Ser-99, and Ser-137 each carry phosphoserine. Residues 218–324 (FGGSFSPQIG…RDHRRGLNGG (107 aa)) form a disordered region. The segment covering 232–249 (HHPHHPHFQHHHSQHQQQ) has biased composition (basic residues). 2 positions are modified to phosphoserine: Ser-252 and Ser-255. Residues 285 to 300 (WSSYQSPSPTPSSSWS) show a composition bias toward low complexity. Positions 301–311 (PGGGGYGGWGA) are enriched in gly residues. The residue at position 326 (Thr-326) is a Phosphothreonine. Ser-330 and Ser-332 each carry phosphoserine. RRM domains are found at residues 472-563 (RKVF…PWNL) and 580-662 (KTIF…PYVL). Residues 541–543 (KLY) are RNA-binding. Cys-667, Cys-675, Cys-684, Cys-689, Cys-694, Cys-697, His-702, and His-710 together coordinate Zn(2+).

Belongs to the RRM CPEB family. Interacts with TOB1. As to expression, highly expressed in brain, including hippocampus, amygdala, granule and Purkinje cells of the cerebellum (at protein level). Expressed in spinal cord (at protein level). Expressed in kidney, lung and heart (at protein level). Expressed in liver (at protein level). Expressed in spleen and testis (at protein level). Weakly expressed in ovary and in granular cells of dentate gyrus and the pyramidal cells of CA3 and CA1 of the hippocampus.

It localises to the cytoplasm. It is found in the cell projection. Its subcellular location is the dendrite. The protein resides in the dendritic spine. The protein localises to the postsynaptic density. It localises to the axon. It is found in the growth cone. Its subcellular location is the endoplasmic reticulum. The protein resides in the perinuclear region. Sequence-specific RNA-binding protein that binds to the cytoplasmic polyadenylation element (CPE), an uridine-rich sequence element (consensus sequence 5'-UUUUUAU-3') within the mRNA 3'-UTR. RNA binding results in a clear conformational change analogous to the Venus fly trap mechanism. Regulates activation of unfolded protein response (UPR) in the process of adaptation to ER stress in liver, by maintaining translation of CPE-regulated mRNAs in conditions in which global protein synthesis is inhibited. Required for cell cycle progression, specifically for cytokinesis and chromosomal segregation. Plays a role as an oncogene promoting tumor growth and progression by positively regulating translation of t-plasminogen activator/PLAT. Stimulates proliferation of melanocytes. In contrast to CPEB1 and CPEB3, does not play role in synaptic plasticity, learning and memory. The polypeptide is Cytoplasmic polyadenylation element-binding protein 4 (Cpeb4) (Mus musculus (Mouse)).